The chain runs to 372 residues: RNA polymerase sigma factor SigA (372 aa).

The segment at 139 to 209 (LAEANLRLVV…TRAIADQART (71 aa)) is sigma-70 factor domain-2. Positions 163 to 166 (DLIQ) match the Interaction with polymerase core subunit RpoC motif. The segment at 218–294 (ETINKLIRVQ…DQDALAPSDA (77 aa)) is sigma-70 factor domain-3. The segment at 307-360 (VLDTLTDREENVLRLRFGLDDGRTRTLEEVGKVFGVTRERIRQIEAKALRKLRH) is sigma-70 factor domain-4. The segment at residues 333-352 (LEEVGKVFGVTRERIRQIEA) is a DNA-binding region (H-T-H motif).

The protein belongs to the sigma-70 factor family. RpoD/SigA subfamily. As to quaternary structure, interacts transiently with the RNA polymerase catalytic core.

Its subcellular location is the cytoplasm. Functionally, sigma factors are initiation factors that promote the attachment of RNA polymerase to specific initiation sites and are then released. This sigma factor is the primary sigma factor during exponential growth. The sequence is that of RNA polymerase sigma factor SigA from Halalkalibacterium halodurans (strain ATCC BAA-125 / DSM 18197 / FERM 7344 / JCM 9153 / C-125) (Bacillus halodurans).